A 369-amino-acid polypeptide reads, in one-letter code: Cytochrome P450 monooxygenase apf8 (369 aa).

Cysteine 303 is a binding site for heme.

Belongs to the cytochrome P450 family. The cofactor is heme.

It functions in the pathway secondary metabolite biosynthesis. Cytochrome P450 monooxygenase; part of the gene cluster that mediates the biosynthesis of the cyclic tetrapeptide apicidin F (APF). The non-ribosomal peptide synthetase apf1 incorporates four different amino acids to produce apicidin F: L-phenylalanine, D-pipecolic acid (D-pip), N-methoxy-L-tryptophan and L-2-aminooctanedioic acid. L-Phenylalanine is the only proteinogenic amino acid directly used by apf1. The 3 other apf1 substrates are non-proteinogenic and have to be modified by other enzymes of the cluster. Lysine is converted to delta-1-pyrroline-5-carboxylate (P5C) which is reduced to L-pipecolic acid (L-pip) by apf3. L-pip is epimerized to D-pip, probably by apf1 activity, prior to incorporation. L-Tryptophan is N-oxidyzed by one of the cytochrome P450 monooxygenases (apf7 or apf8), and further methylated at the hydroxy group by the O-methyltransferase apf6 to yield N-methoxy-L-tryptophan. The synthesis of the fourth apf1 substrate is more complex. The fatty acid synthase apf5 is involved in the synthesis of the octanoic acid backbone of L-2-aminooctanedioic acid by fixing one acetyl-CoA unit and three malonyl-CoA units. Then one of the cytochrome P450 monooxygenases (apf7 or apf8) may oxidize this backbone to 2-oxooctanoic acid. The aminotransferase apf4 is predicted to catalyze the exchange of the keto group with an amino group. The next step would be the oxidation of 2-aminooctanoic acid by one of the cytochrome P450 monooxygenases (apf7 or apf8). The last step is the oxidation of 2-amino-8-hydroxyoctanoic acid to 2-aminooctanedioic acid is catalyzed by the FAD-dependent monooxygenase apf9. The polypeptide is Cytochrome P450 monooxygenase apf8 (Gibberella fujikuroi (strain CBS 195.34 / IMI 58289 / NRRL A-6831) (Bakanae and foot rot disease fungus)).